The sequence spans 985 residues: Rho guanine nucleotide exchange factor 2 (985 aa).

The segment at 1-32 (MSRIESLTRARIDRSKEQATKTREKEKMKEAK) is disordered. A Phorbol-ester/DAG-type zinc finger spans residues 39-86 (GHLFTTISVSGMTMCYACNKSITAKEALICPTCNVTIHNRCKDTLANC). Phosphoserine occurs at positions 109, 122, 129, 133, and 137. The interval 131 to 161 (RQSLLGSRRGLSSLSLAKSVSTTNIAGHFND) is interaction with DYNLT1. Position 143 is a phosphoserine; by PAK4 (Ser-143). Residues Ser-151, Ser-163, Ser-172, Ser-174, and Ser-177 each carry the phosphoserine modification. A DH domain is found at 236–433 (KKQDVIYELI…KELLSNVDQD (198 aa)). Lys-354 is modified (N6-acetyllysine). The PH domain maps to 473–572 (KLIHEGCLLW…WIRVIQQSVR (100 aa)). Positions 591–619 (LRRIKTKLQQKNQALVELLQKNVELFAEM) form a coiled coil. Ser-646 and Ser-649 each carry phosphoserine. Residue Thr-680 is modified to Phosphothreonine; by MAPK1 or MAPK3. Residues Ser-692, Ser-710, and Ser-781 each carry the phosphoserine modification. Phosphothreonine is present on Thr-795. A coiled-coil region spans residues 797 to 866 (EKQATELALL…RQLAALGQNE (70 aa)). Residue Ser-885 is modified to Phosphoserine. Disordered regions lie at residues 890 to 909 (DALY…DRLD) and 918 to 985 (HRPF…ASES). Phosphotyrosine is present on Tyr-893. Ser-895 is subject to Phosphoserine; by PAK4. Residues 919-938 (RPFDDREAQELGSPEDRLQD) show a composition bias toward basic and acidic residues. Phosphoserine is present on residues Ser-931, Ser-939, and Ser-940. The segment covering 940–949 (SDPDTGSEEE) has biased composition (acidic residues). Thr-944 bears the Phosphothreonine mark. 5 positions are modified to phosphoserine: Ser-946, Ser-951, Ser-952, Ser-955, and Ser-959.

In terms of assembly, found in a complex composed at least of ARHGEF2, NOD2 and RIPK2. Interacts with RIPK2; the interaction mediates tyrosine phosphorylation of RIPK2 by Src kinase CSK. Interacts with RIPK1 and RIPK3. Interacts with YWHAZ/14-3-3 zeta; when phosphorylated at Ser-885. Interacts with the kinases PAK4, AURKA and MAPK1. Interacts with RHOA and RAC1. Interacts with NOD1. Interacts (via the N- terminal zinc finger) with CAPN6 (via domain II). Interacts with DYNLT1. Phosphorylation of Ser-885 by PAK1 induces binding to protein YWHAZ, promoting its relocation to microtubules and the inhibition of its activity. Phosphorylated by AURKA and CDK1 during mitosis, which negatively regulates its activity. Phosphorylation by MAPK1 or MAPK3 increases nucleotide exchange activity. Phosphorylation by PAK4 releases GEF-H1 from the microtubules. Phosphorylated on serine, threonine and tyrosine residues in a RIPK2-dependent manner. In terms of tissue distribution, ubiquitous, with the exception of liver tissue. Levels are high in hemopoietic tissues (thymus, spleen, bone marrow) as well as in kidney and lung. Expressed in the germinal zones of both the neocortex and the cerebellum and in the pontine gray nuclei.

It is found in the cytoplasm. The protein localises to the cytoskeleton. The protein resides in the cell junction. Its subcellular location is the tight junction. It localises to the golgi apparatus. It is found in the spindle. The protein localises to the cytoplasmic vesicle. Functionally, activates Rho-GTPases by promoting the exchange of GDP for GTP. May be involved in epithelial barrier permeability, cell motility and polarization, dendritic spine morphology, antigen presentation, leukemic cell differentiation, cell cycle regulation, innate immune response, and cancer. Binds Rac-GTPases, but does not seem to promote nucleotide exchange activity toward Rac-GTPases. May stimulate instead the cortical activity of Rac. Inactive toward CDC42, TC10, or Ras-GTPases. Forms an intracellular sensing system along with NOD1 for the detection of microbial effectors during cell invasion by pathogens. Involved in innate immune signaling transduction pathway promoting cytokine IL6/interleukin-6 and TNF-alpha secretion in macrophage upon stimulation by bacterial peptidoglycans; acts as a signaling intermediate between NOD2 receptor and RIPK2 kinase. Contributes to the tyrosine phosphorylation of RIPK2 through Src tyrosine kinase leading to NF-kappaB activation by NOD2. Overexpression activates Rho-, but not Rac-GTPases, and increases paracellular permeability. Involved in neuronal progenitor cell division and differentiation. Involved in the migration of precerebellar neurons. The chain is Rho guanine nucleotide exchange factor 2 (Arhgef2) from Mus musculus (Mouse).